The chain runs to 283 residues: Large ribosomal subunit protein uL2c (283 aa).

Positions 229–274 are disordered; that stretch reads GVVMNPIDHPHGGGEGKVPIGRKKPLTPWGHPALGRKSRKRRKYSD. Residues 262–271 show a composition bias toward basic residues; the sequence is LGRKSRKRRK.

It belongs to the universal ribosomal protein uL2 family. As to quaternary structure, part of the 50S ribosomal subunit.

The protein resides in the plastid. In Aneura mirabilis (Parasitic liverwort), this protein is Large ribosomal subunit protein uL2c (rpl2).